We begin with the raw amino-acid sequence, 115 residues long: uncharacterized protein (115 aa).

This is an uncharacterized protein from Homo sapiens (Human).